The following is a 118-amino-acid chain: Large ribosomal subunit protein uL24 (118 aa).

The interval 1 to 24 (MSEQPHKQRTRTKRASLHEKQDQV) is disordered.

The protein belongs to the universal ribosomal protein uL24 family. In terms of assembly, part of the 50S ribosomal subunit.

One of two assembly initiator proteins, it binds directly to the 5'-end of the 23S rRNA, where it nucleates assembly of the 50S subunit. Functionally, located at the polypeptide exit tunnel on the outside of the subunit. This chain is Large ribosomal subunit protein uL24, found in Halobacterium salinarum (strain ATCC 700922 / JCM 11081 / NRC-1) (Halobacterium halobium).